The chain runs to 476 residues: Cytochrome P450 monooxygenase ppzE (476 aa).

Residue cysteine 452 participates in heme binding.

Belongs to the cytochrome P450 family. Heme serves as cofactor.

It functions in the pathway secondary metabolite biosynthesis. Its function is as follows. Cytochrome P450 monooxygenase; part of the gene cluster that mediates the biosynthesis of pyrrolopyrazines, secondary metabolites showing insecticidal activity. The role of ppzE within the pathway has still to be determined. The single multifunctional NRPS ppzA is sufficient to produce peramine via condensation of 1-pyrroline-5-carboxylate and arginine, N-methylation of the alpha-amino group of arginine and reduction of the thioester and the cyclization to form an iminium ion resulting in release from the peptide synthetase. Deprotonation of this intermediate and oxidation of the pyrroline ring would give rise to peramine. In Epichloe species that produce only peramine, the peramine synthetase gene is not localized in a gene cluster, in contrast to Metarhizium species that contain additional pyrrolopyrazine biosynthesis genes. The 2-oxoglutarate-Fe(II) type oxidoreductase ppzC hydroxylates peramine to yield the newly identified compound 8-hydroxyperamine whereas ppzD converts L-proline into trans-4-hydroxy-L-proline, a precursor of peramine biosynthesis. This chain is Cytochrome P450 monooxygenase ppzE, found in Metarhizium majus (strain ARSEF 297).